A 467-amino-acid polypeptide reads, in one-letter code: Methylenetetrahydrofolate--tRNA-(uracil-5-)-methyltransferase TrmFO (467 aa).

Residue 10–15 coordinates FAD; sequence GAGLAG.

Belongs to the MnmG family. TrmFO subfamily. The cofactor is FAD.

The protein localises to the cytoplasm. It carries out the reaction uridine(54) in tRNA + (6R)-5,10-methylene-5,6,7,8-tetrahydrofolate + NADH + H(+) = 5-methyluridine(54) in tRNA + (6S)-5,6,7,8-tetrahydrofolate + NAD(+). The catalysed reaction is uridine(54) in tRNA + (6R)-5,10-methylene-5,6,7,8-tetrahydrofolate + NADPH + H(+) = 5-methyluridine(54) in tRNA + (6S)-5,6,7,8-tetrahydrofolate + NADP(+). In terms of biological role, catalyzes the folate-dependent formation of 5-methyl-uridine at position 54 (M-5-U54) in all tRNAs. In Prochlorococcus marinus (strain MIT 9515), this protein is Methylenetetrahydrofolate--tRNA-(uracil-5-)-methyltransferase TrmFO.